Here is a 533-residue protein sequence, read N- to C-terminus: Adenosine deaminase (533 aa).

The signal sequence occupies residues 1-19 (MKILLAVVFVLNLTNLAVP).

This sequence belongs to the metallo-dependent hydrolases superfamily. Adenosine and AMP deaminases family. ADGF subfamily. Requires Zn(2+) as cofactor. Proteolytically cleaved by human mast cell tryptase and chymase. In terms of tissue distribution, female salivary gland (at protein level).

It is found in the secreted. The catalysed reaction is adenosine + H2O + H(+) = inosine + NH4(+). The enzyme catalyses 2'-deoxyadenosine + H2O + H(+) = 2'-deoxyinosine + NH4(+). In terms of biological role, catalyzes the deamination of adenosine to inosine and deoxyadenosine to deoxyinosine. Induces degranulation of host mast cells, and secretion of tryptase and IL6. Modulates enzymatic activities of human tryptase and chymase. Induces release of cytokines, such as IL1B, IL6, TNF, CCL2, IFN-beta (INFB1) and ISG15, from host monocytes and macrophages. Activates host NF-kappa-B signaling pathway in TAK1/MAP3K7-dependent manner. (Microbial infection) Promotes replication of dengue virus type 2 in host cells probably via modulation of cytokine production in host macrophages and monocytes. This is Adenosine deaminase from Aedes albopictus (Asian tiger mosquito).